A 783-amino-acid polypeptide reads, in one-letter code: Outer membrane usher protein FanD (783 aa).

Residues 1 to 23 (MNRKKHQILKILLLCLISSKSSA) form the signal peptide. Cys-763 and Cys-782 are joined by a disulfide.

This sequence belongs to the fimbrial export usher family.

It is found in the cell outer membrane. In terms of biological role, involved in the export and assembly of K99 fimbrial subunits across the outer membrane. In Escherichia coli, this protein is Outer membrane usher protein FanD (fanD).